The chain runs to 137 residues: Glutaredoxin-C9 (137 aa).

One can recognise a Glutaredoxin domain in the interval 32–136 (GERVRMVVEE…PILKEVGALW (105 aa)). Residues Cys-52 and Cys-55 are joined by a disulfide bond. Positions 134-137 (ALWL) match the Responsive for interaction with TGA factors motif.

It belongs to the glutaredoxin family. CC-type subfamily. As to quaternary structure, interacts with TGA2 and TGA6.

It is found in the cytoplasm. Its subcellular location is the nucleus. Its function is as follows. Has a glutathione-disulfide oxidoreductase activity in the presence of NADPH and glutathione reductase. Reduces low molecular weight disulfides and proteins. The polypeptide is Glutaredoxin-C9 (GRXC9) (Arabidopsis thaliana (Mouse-ear cress)).